The primary structure comprises 209 residues: Na(+)-translocating NADH-quinone reductase subunit D (209 aa).

Transmembrane regions (helical) follow at residues 42 to 62 (LVMT…ISLI), 72 to 92 (IIVQ…ILQA), 103 to 123 (VFVG…AYAM), 131 to 151 (FMDG…VGFL), and 178 to 198 (NGLF…IWGL).

This sequence belongs to the NqrDE/RnfAE family. As to quaternary structure, composed of six subunits; NqrA, NqrB, NqrC, NqrD, NqrE and NqrF.

It localises to the cell inner membrane. It catalyses the reaction a ubiquinone + n Na(+)(in) + NADH + H(+) = a ubiquinol + n Na(+)(out) + NAD(+). In terms of biological role, NQR complex catalyzes the reduction of ubiquinone-1 to ubiquinol by two successive reactions, coupled with the transport of Na(+) ions from the cytoplasm to the periplasm. NqrA to NqrE are probably involved in the second step, the conversion of ubisemiquinone to ubiquinol. The chain is Na(+)-translocating NADH-quinone reductase subunit D from Photorhabdus laumondii subsp. laumondii (strain DSM 15139 / CIP 105565 / TT01) (Photorhabdus luminescens subsp. laumondii).